A 757-amino-acid chain; its full sequence is E3 ubiquitin-protein ligase RNF12-B (757 aa).

Residues 1–10 are compositionally biased toward polar residues; it reads MESADSTGKG. 3 disordered regions span residues 1–29, 68–519, and 619–652; these read MESA…LDRE, LQQI…TYES, and EPAE…GGVT. The segment covering 11 to 21 has biased composition (low complexity); the sequence is STEQSESQRQS. Polar residues-rich tracts occupy residues 110–138 and 147–163; these read SVRQ…NPNS and INVN…SLDQ. 21 consecutive repeat copies span residues 197 to 202, 203 to 208, 209 to 214, 215 to 220, 221 to 226, 227 to 232, 237 to 242, 243 to 248, 249 to 254, 255 to 260, 261 to 266, 267 to 272, 273 to 278, 279 to 284, 285 to 290, 291 to 296, 297 to 302, 303 to 308, 309 to 314, 315 to 320, and 321 to 326. The interval 197–326 is 21 X 6 AA approximate repeats of P-[EV]-S-V-[PA]-[EV]; that stretch reads PESVDEPVSV…SVPVPESVPV (130 aa). Residues 202–237 show a composition bias toward low complexity; the sequence is EPVSVAEPVSVAEPVSVAEPESVAEPESVAASVPVP. Positions 245-313 are enriched in acidic residues; sequence SVPEPESVPE…ESVPEPESIA (69 aa). Residues 314–327 are compositionally biased toward low complexity; that stretch reads EPESVPVPESVPVA. The span at 352–367 shows a compositional bias: basic and acidic residues; it reads RSPDQRRTRARTDRSR. The span at 383–392 shows a compositional bias: polar residues; the sequence is HSSSQTVDAS. The span at 408–424 shows a compositional bias: low complexity; the sequence is SSQVHSSSSNETEGSSR. Residues 428–452 are compositionally biased toward polar residues; that stretch reads HITARQQALGTEGQSQSTVHLSNPE. The span at 453–466 shows a compositional bias: low complexity; the sequence is SRSSSQTPQTDSPS. Residues 467 to 476 show a composition bias toward polar residues; it reads NAETTGTGQR. Residues 490–500 show a composition bias toward basic and acidic residues; it reads RPGDYRQRDSI. Residues 501-517 show a composition bias toward polar residues; the sequence is ANRTRSRSQTPNNTVTY. The RING-type; atypical zinc finger occupies 703–744; it reads CSVCITEYTEGNKLRKLPCSHEYHIHCIDRWLSENSTCPICR. The PDZ-binding signature appears at 754–757; it reads ESIV.

Belongs to the RNF12 family. In terms of assembly, forms homodimers through the C-terminal region. The N-terminus interacts with the homeobox of LIM/homeobox factor lhx1/lim1, with lhx3/lim3 and lhx5/lim5, and with the N-terminus of ldb1. In terms of tissue distribution, shows overlapping expression with lhx1/lim1 and ldb1 in the gastrula mesoderm, and expression overlaps with ldb1 throughout early embryogenesis. After gastrulation, expression is gradually restricted to tissues originated from the ectoderm, the neuroectoderm, neural crest and epidermis, and subsequently to the neural tube as well as the head and tailbud region.

The protein localises to the nucleus. It carries out the reaction S-ubiquitinyl-[E2 ubiquitin-conjugating enzyme]-L-cysteine + [acceptor protein]-L-lysine = [E2 ubiquitin-conjugating enzyme]-L-cysteine + N(6)-ubiquitinyl-[acceptor protein]-L-lysine.. It functions in the pathway protein modification; protein ubiquitination. Acts as an E3 ubiquitin-protein ligase specific for ldb1, mediating ubiquitination and proteasome-dependent degradation of excess ldb1 in a RING-dependent manner. Does not degrade ldb1 bound to lhx1/lim1, nor lim1 itself and thus contributes to the establishment of proper ldb1-lhx1/lim1 stoichiometry and the formation of a ldb1-lhx1/lim1 complex. Interferes with Spemann organizer function and suppresses secondary axis formation induced by ldb1 and lhx1/lim1. In Xenopus laevis (African clawed frog), this protein is E3 ubiquitin-protein ligase RNF12-B (rnf12-b).